The primary structure comprises 509 residues: Tyrosine-protein phosphatase non-receptor type substrate 1 (509 aa).

An N-terminal signal peptide occupies residues 1 to 31 (MEPAGPAPGRLGPLLFCLLLSASCFCAGASG). In terms of domain architecture, Ig-like V-type spans 32-138 (KELKVTQADK…IVEPDTEIKS (107 aa)). Topologically, residues 32–373 (KELKVTQADK…PDNNAYYNWN (342 aa)) are extracellular. Residues Asn54, Asn93, Asn169, Asn181, Asn205, Asn209, Asn242, Asn246, Asn271, Asn293, Asn312, Asn320, and Asn345 are each glycosylated (N-linked (GlcNAc...) asparagine). Cysteines 55 and 122 form a disulfide. Ig-like C1-type domains lie at 150–248 (PSSP…ANFS) and 255–349 (PTLK…HTVR). Cys172 and Cys229 are oxidised to a cystine. Cys274 and Cys332 are joined by a disulfide. A helical membrane pass occupies residues 374–394 (VFIGVGVACALLVVLLMAALY). Topologically, residues 395–509 (LLRIKQKKAK…EYASVQVQRK (115 aa)) are cytoplasmic. Phosphotyrosine; by Tyr-kinases is present on Tyr436. The SH2-binding motif lies at 436–439 (YADL). The disordered stretch occupies residues 441 to 472 (LPKEKKPAPRVPEPNNHTEYASIETGKLPRPE). The SH3-binding signature appears at 446–451 (KPAPRV). Phosphotyrosine; by Tyr-kinases occurs at positions 460, 477, and 501. 3 consecutive short sequence motifs (SH2-binding) follow at residues 460–463 (YASI), 477–480 (YADL), and 501–504 (YASV). The disordered stretch occupies residues 485–509 (LNRAQPTPKPEPSFSEYASVQVQRK). The span at 500–509 (EYASVQVQRK) shows a compositional bias: polar residues.

Binds PTPN11 when tyrosine-phosphorylated, except in macrophages, where it primarily binds PTPN6. Binds GRB2 in vitro. Binds FGR. Binds JAK2 irrespective of its phosphorylation status and forms a stable complex. Binds SCAP1 and/or SCAP2. The resulting complex recruits FYB1. Binds PTK2B. Interacts with TRIM2. Post-translationally, N-glycosylated. Phosphorylated on tyrosine residues in response to insulin, cell adhesion or epidermal growth factors. Dephosphorylated by PTPN11. In terms of tissue distribution, highly expressed in brain, spleen, lung, liver and kidney. Detected at lower levels in heart. Highly expressed in alveolar and peritoneal macrophages, and at lower levels in dendritic cells.

It localises to the membrane. Functionally, immunoglobulin-like cell surface receptor for CD47. Acts as docking protein and induces translocation of PTPN6, PTPN11 and other binding partners from the cytosol to the plasma membrane. Supports adhesion of cerebellar neurons, neurite outgrowth and glial cell attachment. May play a key role in intracellular signaling during synaptogenesis and in synaptic function. Involved in the negative regulation of receptor tyrosine kinase-coupled cellular responses induced by cell adhesion, growth factors or insulin. Mediates negative regulation of phagocytosis, mast cell activation and dendritic cell activation. CD47 binding prevents maturation of immature dendritic cells and inhibits cytokine production by mature dendritic cells. Plays a role in antiviral immunity and limits new world arenavirus infection by decreasing virus internalization. Receptor for THBS1. Interaction with THBS1 stimulates phosphorylation of SIRPA. In response to THBS1, involved in ROS signaling in non-phagocytic cells, stimulating NADPH oxidase-derived ROS production. This chain is Tyrosine-protein phosphatase non-receptor type substrate 1 (Sirpa), found in Rattus norvegicus (Rat).